The chain runs to 55 residues: ATP synthase F(0) complex subunit 8 (55 aa).

A helical transmembrane segment spans residues 4-24; that stretch reads LNPSPWFIILLFSWVIFMVIL.

Belongs to the ATPase protein 8 family. As to quaternary structure, component of the ATP synthase complex composed at least of ATP5F1A/subunit alpha, ATP5F1B/subunit beta, ATP5MC1/subunit c (homooctomer), MT-ATP6/subunit a, MT-ATP8/subunit 8, ATP5ME/subunit e, ATP5MF/subunit f, ATP5MG/subunit g, ATP5MK/subunit k, ATP5MJ/subunit j, ATP5F1C/subunit gamma, ATP5F1D/subunit delta, ATP5F1E/subunit epsilon, ATP5PF/subunit F6, ATP5PB/subunit b, ATP5PD/subunit d, ATP5PO/subunit OSCP. ATP synthase complex consists of a soluble F(1) head domain (subunits alpha(3) and beta(3)) - the catalytic core - and a membrane F(0) domain - the membrane proton channel (subunits c, a, 8, e, f, g, k and j). These two domains are linked by a central stalk (subunits gamma, delta, and epsilon) rotating inside the F1 region and a stationary peripheral stalk (subunits F6, b, d, and OSCP).

The protein localises to the mitochondrion membrane. In terms of biological role, subunit 8, of the mitochondrial membrane ATP synthase complex (F(1)F(0) ATP synthase or Complex V) that produces ATP from ADP in the presence of a proton gradient across the membrane which is generated by electron transport complexes of the respiratory chain. ATP synthase complex consist of a soluble F(1) head domain - the catalytic core - and a membrane F(1) domain - the membrane proton channel. These two domains are linked by a central stalk rotating inside the F(1) region and a stationary peripheral stalk. During catalysis, ATP synthesis in the catalytic domain of F(1) is coupled via a rotary mechanism of the central stalk subunits to proton translocation. In vivo, can only synthesize ATP although its ATP hydrolase activity can be activated artificially in vitro. Part of the complex F(0) domain. This chain is ATP synthase F(0) complex subunit 8, found in Scyliorhinus canicula (Small-spotted catshark).